The following is a 123-amino-acid chain: Large ribosomal subunit protein uL14 (123 aa).

Belongs to the universal ribosomal protein uL14 family. In terms of assembly, part of the 50S ribosomal subunit. Forms a cluster with proteins L3 and L19. In the 70S ribosome, L14 and L19 interact and together make contacts with the 16S rRNA in bridges B5 and B8.

Functionally, binds to 23S rRNA. Forms part of two intersubunit bridges in the 70S ribosome. The sequence is that of Large ribosomal subunit protein uL14 from Erwinia tasmaniensis (strain DSM 17950 / CFBP 7177 / CIP 109463 / NCPPB 4357 / Et1/99).